Consider the following 337-residue polypeptide: MAIDVFYDDDADLSIIQGRKVAIIGYGSQGHAHAQNLRESGVEVAIGLREGSKSREKAEEAGFKVLNNAEASEWADVIMLLAPDTSQAQIYENDIAPNLKDGDALFFGHGLNIHFGMIKPEDNITIGMVAPKGPGHLVRRQYVDGKGVPCLIAVEQDPKGNGRDLALSYAAAIGGGRAGVIPTTFEAETVTDLFGEQAVLCGGTEELIKTGFEVLVEAGYEPEMAYFECLHELKLIVDLIFEGGIKNMNYSVSDTAEFGGYISGPRVIDADTKERMKGILSDIQDGTFTKRLVANVEGGNKELEELRASYNDHEIEKTGEKLRDLMSWVKNPLNETA.

Positions 3–183 (IDVFYDDDAD…GGGRAGVIPT (181 aa)) constitute a KARI N-terminal Rossmann domain. NADP(+) contacts are provided by residues 26 to 29 (YGSQ), R49, S52, S54, and 84 to 87 (DTSQ). H109 is an active-site residue. NADP(+) is bound at residue G135. A KARI C-terminal knotted domain is found at 184–329 (TFEAETVTDL…EKLRDLMSWV (146 aa)). Residues D192, E196, E228, and E232 each contribute to the Mg(2+) site. Residue S253 coordinates substrate.

Belongs to the ketol-acid reductoisomerase family. The cofactor is Mg(2+).

It catalyses the reaction (2R)-2,3-dihydroxy-3-methylbutanoate + NADP(+) = (2S)-2-acetolactate + NADPH + H(+). It carries out the reaction (2R,3R)-2,3-dihydroxy-3-methylpentanoate + NADP(+) = (S)-2-ethyl-2-hydroxy-3-oxobutanoate + NADPH + H(+). It participates in amino-acid biosynthesis; L-isoleucine biosynthesis; L-isoleucine from 2-oxobutanoate: step 2/4. The protein operates within amino-acid biosynthesis; L-valine biosynthesis; L-valine from pyruvate: step 2/4. In terms of biological role, involved in the biosynthesis of branched-chain amino acids (BCAA). Catalyzes an alkyl-migration followed by a ketol-acid reduction of (S)-2-acetolactate (S2AL) to yield (R)-2,3-dihydroxy-isovalerate. In the isomerase reaction, S2AL is rearranged via a Mg-dependent methyl migration to produce 3-hydroxy-3-methyl-2-ketobutyrate (HMKB). In the reductase reaction, this 2-ketoacid undergoes a metal-dependent reduction by NADPH to yield (R)-2,3-dihydroxy-isovalerate. This chain is Ketol-acid reductoisomerase (NADP(+)), found in Corynebacterium urealyticum (strain ATCC 43042 / DSM 7109).